The sequence spans 482 residues: MFS-type transporter traF (482 aa).

Polar residues predominate over residues 1-14 (MTSGTEQATLNTEE). The disordered stretch occupies residues 1–22 (MTSGTEQATLNTEENGSDSDHL). N-linked (GlcNAc...) asparagine glycans are attached at residues Asn15 and Asn45. 9 consecutive transmembrane segments (helical) span residues 52-72 (VFITACLASLVCISTFGSSVM), 89-109 (LSILATALYVLGFAVGPLLFG), 125-145 (VFLFAIFSIPIAVAKNVATIF), 149-169 (FLCGTFAAAPLAIAGGGLADL), 176-196 (GIAVAGFASATFLGPVLGPLV), 209-229 (WTQWLSIIFSLVFLAIYFVFC), 275-295 (PILALLTLYMGFIYGFLYLCF), 312-332 (IGSLPFLSITVGVLIGVVIII), and 354-374 (LVPMMIGSILMPAGIFWFAWT). A glycan (N-linked (GlcNAc...) asparagine) is linked at Asn376. Transmembrane regions (helical) follow at residues 379–399 (LPWAPQVVSGVFIGCGILLIF), 427–447 (LLGAGFPLFASYMFDNLGVPW), and 448–468 (AMSLLGFLCVALVPVPFLFFI).

The protein belongs to the major facilitator superfamily. CAR1 family.

It is found in the membrane. Its function is as follows. MFS-type transporter; part of the tra gene cluster that produces terrestric acid. The clavatol biosynthesis cluster cla and the terrestric acid cluster tra are both involved in the production of peniphenones and penilactones. This chain is MFS-type transporter traF, found in Penicillium crustosum (Blue mold fungus).